A 487-amino-acid chain; its full sequence is Glutamyl-tRNA(Gln) amidotransferase subunit A (487 aa).

Catalysis depends on charge relay system residues Lys-76 and Ser-151. Ser-175 acts as the Acyl-ester intermediate in catalysis.

It belongs to the amidase family. GatA subfamily. Heterotrimer of A, B and C subunits.

The catalysed reaction is L-glutamyl-tRNA(Gln) + L-glutamine + ATP + H2O = L-glutaminyl-tRNA(Gln) + L-glutamate + ADP + phosphate + H(+). Allows the formation of correctly charged Gln-tRNA(Gln) through the transamidation of misacylated Glu-tRNA(Gln) in organisms which lack glutaminyl-tRNA synthetase. The reaction takes place in the presence of glutamine and ATP through an activated gamma-phospho-Glu-tRNA(Gln). The chain is Glutamyl-tRNA(Gln) amidotransferase subunit A from Azoarcus sp. (strain BH72).